Reading from the N-terminus, the 297-residue chain is HTH-type transcriptional regulator ArgP (297 aa).

The region spanning 4–60 (PDYRTLQALDAVIRERGFERAAQKLCITQSAVSQRIKQLENLFGQPLLVRTVPPRPT) is the HTH lysR-type domain. The H-T-H motif DNA-binding region spans 21–40 (FERAAQKLCITQSAVSQRIK).

This sequence belongs to the LysR transcriptional regulatory family. As to quaternary structure, homodimer.

Its function is as follows. Controls the transcription of genes involved in arginine and lysine metabolism. This is HTH-type transcriptional regulator ArgP from Yersinia enterocolitica serotype O:8 / biotype 1B (strain NCTC 13174 / 8081).